A 371-amino-acid chain; its full sequence is RT1 class I histocompatibility antigen, AA alpha chain (371 aa).

A signal peptide spans 1–24; that stretch reads MEAMAPRTLLLLLAAALAPTQTRA. Residues 25 to 114 form an alpha-1 region; it reads GSHSLRYFYT…LRGYYNQSEG (90 aa). The Extracellular segment spans residues 25 to 311; it reads GSHSLRYFYT…PSTDSNMETT (287 aa). The N-linked (GlcNAc...) asparagine glycan is linked to Asn110. Residues 115–206 are alpha-2; the sequence is GSHTIQEMYG…ELGKETLLRS (92 aa). The interval 207–298 is alpha-3; that stretch reads DPPEAHVTLH…GLPKPLSQRW (92 aa). The region spanning 209-295 is the Ig-like C1-type domain; that stretch reads PEAHVTLHPR…EHEGLPKPLS (87 aa). N-linked (GlcNAc...) asparagine glycosylation is present at Asn280. The tract at residues 299 to 311 is connecting peptide; that stretch reads EPSPSTDSNMETT. The helical transmembrane segment at 312–336 threads the bilayer; sequence VIYVILGAVAMIGAVAIIGAMVAVV. Over 337-371 the chain is Cytoplasmic; that stretch reads RRRKRNTGGKGGDYAPAPGRDSSQSSDVSLPDCKA. The segment at 342-371 is disordered; sequence NTGGKGGDYAPAPGRDSSQSSDVSLPDCKA. Ser362 and Ser365 each carry phosphoserine.

This sequence belongs to the MHC class I family. Heterodimer of an alpha chain and a beta chain (beta-2-microglobulin).

It is found in the membrane. Involved in the presentation of foreign antigens to the immune system. In Rattus norvegicus (Rat), this protein is RT1 class I histocompatibility antigen, AA alpha chain.